The following is a 337-amino-acid chain: Ketol-acid reductoisomerase (NADP(+)) (337 aa).

The region spanning 2–182 (AKIFYDNDAD…GATRAGVLLT (181 aa)) is the KARI N-terminal Rossmann domain. NADP(+) is bound by residues 25–28 (YGSQ), Ser51, Ser53, and 83–86 (DTSQ). The active site involves His108. Gly134 contributes to the NADP(+) binding site. A KARI C-terminal knotted domain is found at 183–328 (TFAEETETDL…ANLRKMMPFI (146 aa)). Mg(2+)-binding residues include Asp191, Glu195, Glu227, and Glu231. Substrate is bound at residue Ser252.

This sequence belongs to the ketol-acid reductoisomerase family. Requires Mg(2+) as cofactor.

It catalyses the reaction (2R)-2,3-dihydroxy-3-methylbutanoate + NADP(+) = (2S)-2-acetolactate + NADPH + H(+). The enzyme catalyses (2R,3R)-2,3-dihydroxy-3-methylpentanoate + NADP(+) = (S)-2-ethyl-2-hydroxy-3-oxobutanoate + NADPH + H(+). Its pathway is amino-acid biosynthesis; L-isoleucine biosynthesis; L-isoleucine from 2-oxobutanoate: step 2/4. It functions in the pathway amino-acid biosynthesis; L-valine biosynthesis; L-valine from pyruvate: step 2/4. In terms of biological role, involved in the biosynthesis of branched-chain amino acids (BCAA). Catalyzes an alkyl-migration followed by a ketol-acid reduction of (S)-2-acetolactate (S2AL) to yield (R)-2,3-dihydroxy-isovalerate. In the isomerase reaction, S2AL is rearranged via a Mg-dependent methyl migration to produce 3-hydroxy-3-methyl-2-ketobutyrate (HMKB). In the reductase reaction, this 2-ketoacid undergoes a metal-dependent reduction by NADPH to yield (R)-2,3-dihydroxy-isovalerate. This is Ketol-acid reductoisomerase (NADP(+)) from Sorangium cellulosum (strain So ce56) (Polyangium cellulosum (strain So ce56)).